The primary structure comprises 283 residues: Pantothenate synthetase (283 aa).

Residue 31-38 participates in ATP binding; it reads MGALHDGH. The active-site Proton donor is His-38. Gln-62 serves as a coordination point for (R)-pantoate. Gln-62 serves as a coordination point for beta-alanine. Residue 148–151 participates in ATP binding; that stretch reads GKKD. Gln-154 is a (R)-pantoate binding site. Residues Val-177 and 185–188 each bind ATP; that span reads KSSR.

The protein belongs to the pantothenate synthetase family. In terms of assembly, homodimer.

It is found in the cytoplasm. The enzyme catalyses (R)-pantoate + beta-alanine + ATP = (R)-pantothenate + AMP + diphosphate + H(+). It participates in cofactor biosynthesis; (R)-pantothenate biosynthesis; (R)-pantothenate from (R)-pantoate and beta-alanine: step 1/1. In terms of biological role, catalyzes the condensation of pantoate with beta-alanine in an ATP-dependent reaction via a pantoyl-adenylate intermediate. The polypeptide is Pantothenate synthetase (Staphylococcus aureus (strain Mu3 / ATCC 700698)).